The following is a 384-amino-acid chain: Putative spore germination protein YfkR (384 aa).

A signal peptide spans 1-20 (MKKTIYKCVLPLLICILLTG). Residue Cys21 is the site of N-palmitoyl cysteine attachment. The S-diacylglycerol cysteine moiety is linked to residue Cys21.

Belongs to the GerABKC lipoprotein family.

Its subcellular location is the cell membrane. Its function is as follows. May be involved in spore germination. The protein is Putative spore germination protein YfkR (yfkR) of Bacillus subtilis (strain 168).